The primary structure comprises 520 residues: Glucose-1-phosphate adenylyltransferase small subunit, chloroplastic (520 aa).

The transit peptide at 1–71 (MATMAAIGSL…RTPSIVSPKA (71 aa)) directs the protein to the chloroplast. Positions 1 to 81 (MATMAAIGSL…VSDSQNSQTC (81 aa)) are disordered. The span at 14–27 (SSSSNHTRRLSSSS) shows a compositional bias: low complexity. Polar residues predominate over residues 28–51 (QRKTLSFSSSSLTGEKLNPTQEII).

Belongs to the bacterial/plant glucose-1-phosphate adenylyltransferase family. In terms of assembly, heterotetramer. As to expression, leaves.

The protein resides in the plastid. It is found in the chloroplast. It carries out the reaction alpha-D-glucose 1-phosphate + ATP + H(+) = ADP-alpha-D-glucose + diphosphate. It functions in the pathway glycan biosynthesis; starch biosynthesis. Activated by 3'phosphoglycerate, inhibited by orthophosphate. Allosteric regulation. Functionally, this protein plays a role in synthesis of starch. It catalyzes the synthesis of the activated glycosyl donor, ADP-glucose from Glc-1-P and ATP. The polypeptide is Glucose-1-phosphate adenylyltransferase small subunit, chloroplastic (AGPS1) (Brassica napus (Rape)).